The primary structure comprises 188 residues: Protein-L-isoaspartate O-methyltransferase (188 aa).

The active site involves serine 33.

This sequence belongs to the methyltransferase superfamily. L-isoaspartyl/D-aspartyl protein methyltransferase family.

It is found in the cytoplasm. The catalysed reaction is [protein]-L-isoaspartate + S-adenosyl-L-methionine = [protein]-L-isoaspartate alpha-methyl ester + S-adenosyl-L-homocysteine. Its function is as follows. Catalyzes the methyl esterification of L-isoaspartyl residues in peptides and proteins that result from spontaneous decomposition of normal L-aspartyl and L-asparaginyl residues. It plays a role in the repair and/or degradation of damaged proteins. The sequence is that of Protein-L-isoaspartate O-methyltransferase from Methanocella arvoryzae (strain DSM 22066 / NBRC 105507 / MRE50).